The following is a 212-amino-acid chain: Prolactin (212 aa).

The first 24 residues, 1–24 (MAQRKTNGSKLFMMVLYMVAACSA), serve as a signal peptide directing secretion. 2 disulfide bridges follow: C70–C185 and C202–C212.

It belongs to the somatotropin/prolactin family. In terms of tissue distribution, pituitary gland.

Its subcellular location is the secreted. The sequence is that of Prolactin (prl) from Dicentrarchus labrax (European seabass).